A 286-amino-acid chain; its full sequence is Fructose-bisphosphate aldolase (286 aa).

D-glyceraldehyde 3-phosphate is bound at residue S50. The active-site Proton donor is the D85. H86, D107, E137, and H181 together coordinate Zn(2+). G182 serves as a coordination point for dihydroxyacetone phosphate. H209 provides a ligand contact to Zn(2+). Residues 210-212 and 231-234 contribute to the dihydroxyacetone phosphate site; these read GGT and NVNT.

It belongs to the class II fructose-bisphosphate aldolase family. Requires Zn(2+) as cofactor.

It catalyses the reaction beta-D-fructose 1,6-bisphosphate = D-glyceraldehyde 3-phosphate + dihydroxyacetone phosphate. The protein operates within carbohydrate degradation; glycolysis; D-glyceraldehyde 3-phosphate and glycerone phosphate from D-glucose: step 4/4. Functionally, catalyzes the aldol condensation of dihydroxyacetone phosphate (DHAP or glycerone-phosphate) with glyceraldehyde 3-phosphate (G3P) to form fructose 1,6-bisphosphate (FBP) in gluconeogenesis and the reverse reaction in glycolysis. This chain is Fructose-bisphosphate aldolase (fba), found in Staphylococcus epidermidis (strain ATCC 35984 / DSM 28319 / BCRC 17069 / CCUG 31568 / BM 3577 / RP62A).